Reading from the N-terminus, the 152-residue chain is Small ribosomal subunit protein bS16 (152 aa).

A compositionally biased stretch (basic and acidic residues) spans 118–130; sequence AEKHKAKASEKKA. Positions 118 to 152 are disordered; sequence AEKHKAKASEKKAAAAASADEAGSAAADDAEGSES. Over residues 131–144 the composition is skewed to low complexity; the sequence is AAAASADEAGSAAA.

Belongs to the bacterial ribosomal protein bS16 family.

This is Small ribosomal subunit protein bS16 from Beutenbergia cavernae (strain ATCC BAA-8 / DSM 12333 / CCUG 43141 / JCM 11478 / NBRC 16432 / NCIMB 13614 / HKI 0122).